Reading from the N-terminus, the 357-residue chain is Alanine racemase (357 aa).

The Proton acceptor; specific for D-alanine role is filled by K33. Position 33 is an N6-(pyridoxal phosphate)lysine (K33). Residue R129 coordinates substrate. Y253 (proton acceptor; specific for L-alanine) is an active-site residue. M301 provides a ligand contact to substrate.

Belongs to the alanine racemase family. In terms of assembly, homodimer. It depends on pyridoxal 5'-phosphate as a cofactor.

The enzyme catalyses L-alanine = D-alanine. Its pathway is amino-acid biosynthesis; D-alanine biosynthesis; D-alanine from L-alanine: step 1/1. In terms of biological role, catalyzes the interconversion of L-alanine and D-alanine. Is highly specific for alanine as substrate. May serve both anabolic and catabolic purposes. The sequence is that of Alanine racemase from Pseudomonas taetrolens.